Consider the following 1622-residue polypeptide: Ferredoxin-dependent glutamate synthase 1, chloroplastic/mitochondrial (1622 aa).

The N-terminal 105 residues, 1–105 (MAMQSLSPVP…LEDILSERGA (105 aa)), are a transit peptide targeting the chloroplast and mitochondrion. Cys106 functions as the For GATase activity in the catalytic mechanism. The Glutamine amidotransferase type-2 domain maps to 106–505 (CGVGFIANLD…PGMMIAVDLV (400 aa)). 1184–1241 (LTETHQTLIANGLRERVILRVDGGLKSGVDVLMAAAMGADEYGFGSLAMIATGCVMAR) provides a ligand contact to FMN. [3Fe-4S] cluster contacts are provided by Cys1237, Cys1243, and Cys1248.

It belongs to the glutamate synthase family. Interacts with SHM1. The cofactor is [3Fe-4S] cluster. FAD serves as cofactor. Requires FMN as cofactor. Highly expressed in leaves. High expression in the leaf mesophyll and phloem companion cell-sieve element complex.

The protein resides in the plastid. The protein localises to the chloroplast stroma. It is found in the mitochondrion matrix. The catalysed reaction is 2 oxidized [2Fe-2S]-[ferredoxin] + 2 L-glutamate = L-glutamine + 2 reduced [2Fe-2S]-[ferredoxin] + 2-oxoglutarate + 2 H(+). Its pathway is amino-acid biosynthesis; L-glutamate biosynthesis via GLT pathway; L-glutamate from 2-oxoglutarate and L-glutamine (ferredoxin route): step 1/1. It functions in the pathway energy metabolism; nitrogen metabolism. Functionally, involved in glutamate biosynthesis in leaf. Required for the reassimilation of ammonium ions generated during photorespiration. This Arabidopsis thaliana (Mouse-ear cress) protein is Ferredoxin-dependent glutamate synthase 1, chloroplastic/mitochondrial.